Here is a 402-residue protein sequence, read N- to C-terminus: Argininosuccinate synthase (402 aa).

Residues 10 to 18 (AYSGGLDTS) and alanine 37 each bind ATP. Residues tyrosine 88 and serine 93 each coordinate L-citrulline. Glycine 118 contacts ATP. Positions 120, 124, and 125 each coordinate L-aspartate. Residue asparagine 124 coordinates L-citrulline. Arginine 128, serine 179, serine 188, glutamate 264, and tyrosine 276 together coordinate L-citrulline.

This sequence belongs to the argininosuccinate synthase family. Type 1 subfamily. Homotetramer.

The protein localises to the cytoplasm. The enzyme catalyses L-citrulline + L-aspartate + ATP = 2-(N(omega)-L-arginino)succinate + AMP + diphosphate + H(+). It participates in amino-acid biosynthesis; L-arginine biosynthesis; L-arginine from L-ornithine and carbamoyl phosphate: step 2/3. This Alkalilimnicola ehrlichii (strain ATCC BAA-1101 / DSM 17681 / MLHE-1) protein is Argininosuccinate synthase.